A 194-amino-acid chain; its full sequence is Granulocyte colony-stimulating factor (194 aa).

Positions 1–20 (KLMALQLLLWHSALWMVQEA) are cleaved as a signal peptide. Cystine bridges form between Cys56-Cys62 and Cys84-Cys94. Thr153 carries an O-linked (GalNAc...) threonine glycan.

The protein belongs to the IL-6 superfamily. In terms of assembly, monomer. O-glycosylated.

The protein resides in the secreted. Its function is as follows. Granulocyte/macrophage colony-stimulating factors are cytokines that act in hematopoiesis by controlling the production, differentiation, and function of 2 related white cell populations of the blood, the granulocytes and the monocytes-macrophages. This CSF induces granulocytes. In Felis catus (Cat), this protein is Granulocyte colony-stimulating factor (CSF3).